Here is a 439-residue protein sequence, read N- to C-terminus: Xylose isomerase (439 aa).

Active-site residues include H101 and D104. 7 residues coordinate Mg(2+): E232, E268, H271, D296, D307, D309, and D339.

It belongs to the xylose isomerase family. In terms of assembly, homotetramer. Mg(2+) serves as cofactor.

The protein resides in the cytoplasm. The catalysed reaction is alpha-D-xylose = alpha-D-xylulofuranose. This is Xylose isomerase from Haemophilus influenzae (strain 86-028NP).